A 203-amino-acid polypeptide reads, in one-letter code: Glycerol-3-phosphate acyltransferase (203 aa).

5 helical membrane-spanning segments follow: residues 5–25, 55–75, 84–104, 118–138, and 159–179; these read IYIA…GLIL, LAAA…IVAA, IAAN…LFPV, IGVL…MWLA, and IFLW…LTLL.

Belongs to the PlsY family. As to quaternary structure, probably interacts with PlsX.

The protein resides in the cell inner membrane. It carries out the reaction an acyl phosphate + sn-glycerol 3-phosphate = a 1-acyl-sn-glycero-3-phosphate + phosphate. Its pathway is lipid metabolism; phospholipid metabolism. Its function is as follows. Catalyzes the transfer of an acyl group from acyl-phosphate (acyl-PO(4)) to glycerol-3-phosphate (G3P) to form lysophosphatidic acid (LPA). This enzyme utilizes acyl-phosphate as fatty acyl donor, but not acyl-CoA or acyl-ACP. The chain is Glycerol-3-phosphate acyltransferase from Rhodopseudomonas palustris (strain ATCC BAA-98 / CGA009).